Reading from the N-terminus, the 382-residue chain is Pyrimidine monooxygenase RutA (382 aa).

Residues 68-69 (IK), Asn134, Glu143, 159-160 (RY), and Ser209 each bind FMN.

The protein belongs to the NtaA/SnaA/DszA monooxygenase family. RutA subfamily.

It catalyses the reaction uracil + FMNH2 + NADH + O2 = (Z)-3-ureidoacrylate + FMN + NAD(+) + H2O + H(+). The enzyme catalyses thymine + FMNH2 + NADH + O2 = (Z)-2-methylureidoacrylate + FMN + NAD(+) + H2O + H(+). In terms of biological role, catalyzes the pyrimidine ring opening between N-3 and C-4 by an unusual flavin hydroperoxide-catalyzed mechanism, adding oxygen atoms in the process to yield ureidoacrylate peracid, that immediately reacts with FMN forming ureidoacrylate and FMN-N(5)-oxide. The FMN-N(5)-oxide reacts spontaneously with NADH to produce FMN. Requires the flavin reductase RutF to regenerate FMN in vivo. This is Pyrimidine monooxygenase RutA from Shigella flexneri serotype X (strain 2002017).